The chain runs to 386 residues: 26S proteasome non-ATPase regulatory subunit 13 homolog B (386 aa).

Alanine 2 bears the N-acetylalanine mark. The PCI domain occupies 174-347; sequence FSEFYKNALL…GTVYVSWAQP (174 aa).

This sequence belongs to the proteasome subunit S11 family. In terms of assembly, component of the 19S regulatory particle (RP/PA700) lid subcomplex of the 26S proteasome. The 26S proteasome is composed of a core protease (CP), known as the 20S proteasome, capped at one or both ends by the 19S regulatory particle (RP/PA700). The RP/PA700 complex is composed of at least 17 different subunits in two subcomplexes, the base and the lid, which form the portions proximal and distal to the 20S proteolytic core, respectively. As to expression, ubiquitous with highest expression in flowers.

Functionally, acts as a regulatory subunit of the 26S proteasome which is involved in the ATP-dependent degradation of ubiquitinated proteins. This chain is 26S proteasome non-ATPase regulatory subunit 13 homolog B (RPN9B), found in Arabidopsis thaliana (Mouse-ear cress).